The sequence spans 299 residues: 4-diphosphocytidyl-2-C-methyl-D-erythritol kinase (299 aa).

Residue Lys10 is part of the active site. 96–106 (PVAGGMAGGSA) is a binding site for ATP. The active site involves Asp138.

The protein belongs to the GHMP kinase family. IspE subfamily.

The catalysed reaction is 4-CDP-2-C-methyl-D-erythritol + ATP = 4-CDP-2-C-methyl-D-erythritol 2-phosphate + ADP + H(+). The protein operates within isoprenoid biosynthesis; isopentenyl diphosphate biosynthesis via DXP pathway; isopentenyl diphosphate from 1-deoxy-D-xylulose 5-phosphate: step 3/6. Its function is as follows. Catalyzes the phosphorylation of the position 2 hydroxy group of 4-diphosphocytidyl-2C-methyl-D-erythritol. This chain is 4-diphosphocytidyl-2-C-methyl-D-erythritol kinase, found in Streptomyces coelicolor (strain ATCC BAA-471 / A3(2) / M145).